Here is a 202-residue protein sequence, read N- to C-terminus: Nucleoside triphosphate pyrophosphatase (202 aa).

Aspartate 79 serves as the catalytic Proton acceptor.

It belongs to the Maf family. A divalent metal cation serves as cofactor.

The protein resides in the cytoplasm. It catalyses the reaction a ribonucleoside 5'-triphosphate + H2O = a ribonucleoside 5'-phosphate + diphosphate + H(+). The catalysed reaction is a 2'-deoxyribonucleoside 5'-triphosphate + H2O = a 2'-deoxyribonucleoside 5'-phosphate + diphosphate + H(+). Nucleoside triphosphate pyrophosphatase. May have a dual role in cell division arrest and in preventing the incorporation of modified nucleotides into cellular nucleic acids. The sequence is that of Nucleoside triphosphate pyrophosphatase from Rhodopseudomonas palustris (strain HaA2).